Consider the following 196-residue polypeptide: Glycerol-3-phosphate acyltransferase (196 aa).

6 helical membrane-spanning segments follow: residues 5–25 (VYLL…IIFC), 53–73 (FSAL…VLLA), 80–100 (PSEI…PLFF), 107–127 (GVAT…AAGL), 130–150 (WLIV…TALI), and 153–173 (FYIW…CCLL).

Belongs to the PlsY family. Probably interacts with PlsX.

The protein resides in the cell inner membrane. The catalysed reaction is an acyl phosphate + sn-glycerol 3-phosphate = a 1-acyl-sn-glycero-3-phosphate + phosphate. Its pathway is lipid metabolism; phospholipid metabolism. Its function is as follows. Catalyzes the transfer of an acyl group from acyl-phosphate (acyl-PO(4)) to glycerol-3-phosphate (G3P) to form lysophosphatidic acid (LPA). This enzyme utilizes acyl-phosphate as fatty acyl donor, but not acyl-CoA or acyl-ACP. The sequence is that of Glycerol-3-phosphate acyltransferase from Actinobacillus pleuropneumoniae serotype 7 (strain AP76).